Here is a 536-residue protein sequence, read N- to C-terminus: Velvet complex subunit B (536 aa).

The segment covering 1-26 has biased composition (polar residues); sequence MIQRTTDPAAGSSTSGPPTNSLSWGS. Disordered stretches follow at residues 1–27, 106–143, 157–409, and 508–536; these read MIQRTTDPAAGSSTSGPPTNSLSWGSR, PNAAQDRGPPMPAKPRRPTNPPPPSNTHGSPPAPAIPF, SAPA…RTLV, and KLPLRNRHGSGSKRRRRGAGGGSDDEESD. Residues 25-512 form the Velvet domain; it reads GSRHNGKLYT…NQQNMKLPLR (488 aa). Residues 114–143 are compositionally biased toward pro residues; it reads PPMPAKPRRPTNPPPPSNTHGSPPAPAIPF. Composition is skewed to low complexity over residues 158–170 and 190–265; these read APASDRSPSSASA and PYGP…YPPY. A compositionally biased stretch (polar residues) spans 280-305; it reads TSNFDHSQPVTSSVDQETNSPVVTTT. Residues 306–315 are compositionally biased toward basic and acidic residues; sequence ARDDDQREGE. The segment covering 328–342 has biased composition (low complexity); sequence PSNSGAPSTSPTAST. Over residues 356–399 the composition is skewed to basic and acidic residues; sequence EEREGPDGGPDLREPIEPGSTKAREEEDARTGTEKGDPKDKSDA. Over residues 400 to 409 the composition is skewed to polar residues; sequence QRATYTRTLV. Basic residues predominate over residues 511–525; the sequence is LRNRHGSGSKRRRRG.

Belongs to the velvet family. VelB subfamily. In terms of assembly, component of the heterotrimeric velvet complex composed of laeA, veA and velB; VeA acting as a bridging protein between laeA and velB. Forms a heterodimeric complex with vosA; the formation of the velB-vosA complex is light-dependent.

The protein localises to the nucleus. It localises to the cytoplasm. Its function is as follows. Component of the velvet transcription factor complex that controls sexual/asexual developmental ratio in response to light, promoting sexual development in the darkness while stimulating asexual sporulation under illumination. The velvet complex acts as a global regulator for secondary metabolite gene expression. Component of the velB-VosA heterodimeric complex that plays a dual role in activating genes associated with spore maturation and repressing certain development-associated genes. The velB-VosA complex binds DNA through the DNA-binding domain of vosA that recognizes an 11-nucleotide consensus sequence 5'-CTGGCCGCGGC-3' consisting of two motifs in the promoters of key developmental regulatory genes. The polypeptide is Velvet complex subunit B (Schizophyllum commune (strain H4-8 / FGSC 9210) (Split gill fungus)).